A 210-amino-acid chain; its full sequence is MPEYDYIRDGNAIYERSFAIIRAEADLSRFSEEEADLAVRMVHACGSVEATRQFVFSPDFVSSARAALKAGAPILCDAEMVAHGVTRARLPAGNEVICTLRDPRTPALAAEIGNTRSAAALKLWSERLAGSVVAIGNAPTALFFLLEMLRDGAPKPAAILGMPVGFVGAAESKDALAENSYGVPFAIVRGRLGGSAMTAAALNSLARPGL.

Ser17 and Arg40 together coordinate substrate. The active-site Proton donor/acceptor is His43.

Belongs to the CobH/CbiC family. In terms of assembly, homodimer.

It carries out the reaction precorrin-8X + 3 H(+) = hydrogenobyrinate. The protein operates within cofactor biosynthesis; adenosylcobalamin biosynthesis; cob(II)yrinate a,c-diamide from precorrin-2 (aerobic route): step 8/10. Functionally, catalyzes the conversion of precorrin-8X to hydrogenobyrinate. The protein is Precorrin-8X methylmutase (cobH) of Sinorhizobium sp.